A 483-amino-acid polypeptide reads, in one-letter code: Glutathione reductase (483 aa).

N-acetylmethionine is present on M1. Residue L2 is modified to N-acetylserine. The FAD site is built by S33 and G34. Residue S33 participates in glutathione binding. R40 provides a ligand contact to glutathione. Positions 53, 60, 61, and 69 each coordinate FAD. Cysteines 61 and 66 form a disulfide. Y123 is a glutathione binding site. A139 is an FAD binding site. Residues A205, I208, E211, R228, and R234 each contribute to the NADP(+) site. A glutathione-binding site is contributed by T243. N278 carries N-linked (GlcNAc...) asparagine glycosylation. G294 contacts NADP(+). Residue D334 participates in FAD binding. E340 contributes to the NADP(+) binding site. T342 provides a ligand contact to FAD. R350 lines the glutathione pocket. V375 contributes to the NADP(+) binding site. K425 is a binding site for glutathione. Position 472 (H472) interacts with FAD. The active-site Proton acceptor is H472.

The protein belongs to the class-I pyridine nucleotide-disulfide oxidoreductase family. As to quaternary structure, homodimer. FAD is required as a cofactor.

It localises to the cytoplasm. The protein resides in the nucleus. It is found in the mitochondrion. The protein localises to the peroxisome. The catalysed reaction is 2 glutathione + NADP(+) = glutathione disulfide + NADPH + H(+). In terms of biological role, catalyzes the reduction of glutathione disulfide (GSSG) to reduced glutathione (GSH). Constitutes the major mechanism to maintain a high GSH:GSSG ratio in the cytosol. This chain is Glutathione reductase, found in Saccharomyces cerevisiae (strain ATCC 204508 / S288c) (Baker's yeast).